Consider the following 89-residue polypeptide: MALTQERKNEIIAQFRTHETDTGSPEVQIAVLTEQINTLNEHLRTHKKDHHSRRGLLKMVGKRRNLLTYLRNSDITRYRELITKLGLRR.

Belongs to the universal ribosomal protein uS15 family. Part of the 30S ribosomal subunit. Forms a bridge to the 50S subunit in the 70S ribosome, contacting the 23S rRNA.

Functionally, one of the primary rRNA binding proteins, it binds directly to 16S rRNA where it helps nucleate assembly of the platform of the 30S subunit by binding and bridging several RNA helices of the 16S rRNA. Its function is as follows. Forms an intersubunit bridge (bridge B4) with the 23S rRNA of the 50S subunit in the ribosome. The polypeptide is Small ribosomal subunit protein uS15 (Bacillus anthracis (strain CDC 684 / NRRL 3495)).